We begin with the raw amino-acid sequence, 344 residues long: uncharacterized protein (344 aa).

A disordered region spans residues 190–232 (SGKRVRSAKKSGADAARASEGATCDRASSESVSPTARPPAQAS).

This is an uncharacterized protein from Treponema pallidum (strain Nichols).